Consider the following 967-residue polypeptide: Muscular LMNA-interacting protein (967 aa).

Residue Ser-129 is modified to Phosphoserine. Disordered stretches follow at residues Glu-132–Arg-154, Gly-302–Thr-336, Gln-432–Ser-462, Gly-506–His-628, Gln-644–Leu-685, Ser-786–Thr-838, and Phe-929–Glu-967. Residues Pro-144–Thr-811 form a required for interaction with ISL1 region. Low complexity predominate over residues Thr-437 to Thr-455. The segment covering Thr-508 to Phe-523 has biased composition (polar residues). The segment covering Val-528–Ser-541 has biased composition (low complexity). A compositionally biased stretch (basic and acidic residues) spans Gly-543 to Arg-556. Polar residues-rich tracts occupy residues Ile-558–Ser-567 and Gly-658–Leu-685. Ser-792 is subject to Phosphoserine. A compositionally biased stretch (polar residues) spans Met-800–Thr-811. Over residues Ser-826–Ser-835 the composition is skewed to low complexity. Polar residues predominate over residues Ser-938–Tyr-947. Residues Pro-958–Glu-967 are compositionally biased toward basic and acidic residues.

Directly interacts with LMNA. Interacts with ISL1 (via N-terminal domain); the interaction represses ISL1 transactivator activity. Interactions of ISL1 with MLIP1 and GCN5/KAT2A may be mutually exclusive. May be ubiquitinated by UBE3C ubiquitin ligase; ubiquitination is followed by protein degradation. In terms of tissue distribution, predominantly expressed in the heart and skeletal muscle, but detected at lower levels in the lung and brain (at protein level). Also detected in smooth muscle, thymus and kidney. In brain, expressed by a subpopulation of cells within the hippocampus and cortex. In heart, expressed by cardiomyocytes. Expression is reduced in hypertrophic hearts at the transcript level. However, expression in hypertrophic hearts induced by transverse aortic constriction do not differ from control at the protein level.

The protein localises to the nucleus. The protein resides in the nucleus envelope. It is found in the PML body. It localises to the cytoplasm. Its subcellular location is the cytosol. The protein localises to the cell membrane. The protein resides in the sarcolemma. Its function is as follows. Required for myoblast differentiation into myotubes, possibly acting as a transcriptional regulator of the myogenic program. Required for cardiac adaptation to stress through integrated regulation of the AKT/mTOR pathways and FOXO1. Regulates cardiac homeostasis and plays a role in the protection against cardiac hypertrophy. Binds chromatin. May act as a transcriptional cofactor for ISL1, repressing its transcriptional activity. May also repress MYOCD transcriptional activity. This chain is Muscular LMNA-interacting protein, found in Mus musculus (Mouse).